We begin with the raw amino-acid sequence, 217 residues long: GrpE protein homolog 1, mitochondrial (217 aa).

The transit peptide at 1–27 (MAARCVRLARGSLPAFALSLRSSPRLL) directs the protein to the mitochondrion. At lysine 94 the chain carries N6-acetyllysine; alternate. N6-succinyllysine; alternate is present on lysine 94. The residue at position 100 (lysine 100) is an N6-acetyllysine. Lysine 120 is modified (N6-succinyllysine). Lysine 215 carries the post-translational modification N6-acetyllysine; alternate. Position 215 is an N6-succinyllysine; alternate (lysine 215).

The protein belongs to the GrpE family. As to quaternary structure, probable component of the PAM complex at least composed of a mitochondrial HSP70 protein, GRPEL1 or GRPEL2, TIMM44, TIMM16/PAM16 and TIMM14/DNAJC19. Binds to HSP70, HSC70 and HSJ1B.

The protein localises to the mitochondrion matrix. In terms of biological role, essential component of the PAM complex, a complex required for the translocation of transit peptide-containing proteins from the inner membrane into the mitochondrial matrix in an ATP-dependent manner. Seems to control the nucleotide-dependent binding of mitochondrial HSP70 to substrate proteins. The protein is GrpE protein homolog 1, mitochondrial (GRPEL1) of Bos taurus (Bovine).